Here is a 304-residue protein sequence, read N- to C-terminus: Glycine--tRNA ligase alpha subunit (304 aa).

It belongs to the class-II aminoacyl-tRNA synthetase family. As to quaternary structure, tetramer of two alpha and two beta subunits.

The protein resides in the cytoplasm. It catalyses the reaction tRNA(Gly) + glycine + ATP = glycyl-tRNA(Gly) + AMP + diphosphate. The polypeptide is Glycine--tRNA ligase alpha subunit (Afipia carboxidovorans (strain ATCC 49405 / DSM 1227 / KCTC 32145 / OM5) (Oligotropha carboxidovorans)).